The primary structure comprises 252 residues: Sulfoacetaldehyde reductase 2 (252 aa).

Residue 6 to 30 (LITGATSGFGRAAARRFADAGWSLI) participates in NADP(+) binding. Serine 139 lines the substrate pocket. Tyrosine 152 serves as the catalytic Proton acceptor.

This sequence belongs to the short-chain dehydrogenases/reductases (SDR) family. Homodimer and heterotetramer.

It catalyses the reaction 2-hydroxyethane-1-sulfonate + NADP(+) = sulfoacetaldehyde + NADPH + H(+). It functions in the pathway organosulfur degradation. Functionally, catalyzes the formation of isethionate from 2-sulfoacetaldehyde in the deaminative pathway of taurine. Constitutively expressed enzyme that only mediates a small part of the activity observed in taurine-grown cells. The polypeptide is Sulfoacetaldehyde reductase 2 (isfD2) (Chromohalobacter salexigens (strain ATCC BAA-138 / DSM 3043 / CIP 106854 / NCIMB 13768 / 1H11)).